The primary structure comprises 285 residues: Taffazin (285 aa).

Residues 1–23 lie on the Mitochondrial intermembrane side of the membrane; it reads MDSNNSNNNNKNLKQICDIPKPQ. An intramembrane segment occupies 24–42; the sequence is FLSKGVFTLVGVLCKFWIS. The Mitochondrial intermembrane segment spans residues 43–285; it reads MNTVTTSGID…GRFSHPTIKD (243 aa). The short motif at 74–79 is the HXXXXD motif element; it reads HSSNLD.

Belongs to the taffazin family.

It is found in the mitochondrion outer membrane. It localises to the mitochondrion inner membrane. It catalyses the reaction a 1-acyl-sn-glycero-3-phosphate + a 1,2-diacyl-sn-glycero-3-phospho-(1'-sn-glycerol) = 1-acyl-sn-glycero-3-phospho-(1'-sn-glycerol) + a 1,2-diacyl-sn-glycero-3-phosphate. It carries out the reaction 1-hexadecanoyl-2-(9Z,12Z-octadecadienoyl)-sn-glycero-3-phospho-(1'-sn-glycerol) + 1-(9Z-octadecenoyl)-sn-glycero-3-phosphate = 1-(9Z)-octadecenoyl-2-(9Z,12Z)-octadecadienoyl-sn-glycero-3-phosphate + 1-hexadecanoyl-sn-glycero-3-phospho-(1'-sn-glycerol). The catalysed reaction is 1'-[1,2-diacyl-sn-glycero-3-phospho],3'-[1-acyl-sn-glycero-3-phospho]-glycerol + a 1,2-diacyl-sn-glycero-3-phosphocholine = a cardiolipin + a 1-acyl-sn-glycero-3-phosphocholine. The enzyme catalyses 1-hexadecanoyl-2-(9Z,12Z-octadecadienoyl)-sn-glycero-3-phosphocholine + 1-hexadecanoyl-sn-glycero-3-phosphocholine = 2-(9Z,12Z-octadecadienoyl)-sn-glycero-3-phosphocholine + 1,2-dihexadecanoyl-sn-glycero-3-phosphocholine. It catalyses the reaction 1,2-di-(9Z-octadecenoyl)-sn-glycero-3-phosphocholine + 1-hexadecanoyl-sn-glycero-3-phosphocholine = 1-hexadecanoyl-2-(9Z-octadecenoyl)-sn-glycero-3-phosphocholine + 1-(9Z-octadecenoyl)-sn-glycero-3-phosphocholine. It participates in phospholipid metabolism. Functionally, acyltransferase required to remodel newly synthesized phospholipid cardiolipin (1',3'-bis-[1,2-diacyl-sn-glycero-3-phospho]-glycerol or CL), a key component of the mitochondrial inner membrane, with tissue specific acyl chains necessary for adequate mitochondrial function. Its role in cellular physiology is to improve mitochondrial performance. CL is critical for the coassembly of lipids and proteins in mitochondrial membranes, for instance, remodeling of the acyl groups of CL in the mitochondrial inner membrane affects the assembly and stability of respiratory chain complex IV and its supercomplex forms. Catalyzes the transacylation between phospholipids and lysophospholipids, with the highest rate being between phosphatidylcholine (1,2-diacyl-sn-glycero-3-phosphocholine or PC) and CL. Catalyzes both 1-acyl-sn-glycero-3-phosphocholine (lysophosphatidylcholine or LPC) reacylation and PC-CL transacylation, that means, it exchanges acyl groups between CL and PC by a combination of forward and reverse transacylations. Also catalyzes transacylations between other phospholipids such as phosphatidylethanolamine (1,2-diacyl-sn-glycero-3-phosphoethanolamine or PE) and CL, between PC and PE, and between PC and phosphatidate (1,2-diacyl-sn-glycero-3-phosphate or PA), although at lower rate. Not regiospecific, it transfers acyl groups into any of the sn-1 and sn-2 positions of the monolysocardiolipin (MLCL), which is an important prerequisite for uniformity and symmetry in CL acyl distribution. Cannot transacylate dilysocardiolipin (DLCL), thus, the role of MLCL is limited to that of an acyl acceptor. CoA-independent, it can reshuffle molecular species within a single phospholipid class. Redistributes fatty acids between MLCL, CL, and other lipids, which prolongs the half-life of CL. Its action is completely reversible, which allows for cyclic changes, such as fission and fusion or bending and flattening of the membrane. Hence, by contributing to the flexibility of the lipid composition, it plays an important role in the dynamics of mitochondria membranes. The chain is Taffazin (taz) from Dictyostelium discoideum (Social amoeba).